A 260-amino-acid chain; its full sequence is Taurine import ATP-binding protein TauB (260 aa).

Positions 6–235 (AQQVSVVYAS…RYAHGEPMRS (230 aa)) constitute an ABC transporter domain. Residue 40–47 (GASGCGKS) coordinates ATP.

It belongs to the ABC transporter superfamily. Taurine importer (TC 3.A.1.17.1) family. As to quaternary structure, the complex is composed of two ATP-binding proteins (TauB), two transmembrane proteins (TauC) and a solute-binding protein (TauA).

The protein resides in the cell inner membrane. It catalyses the reaction taurine(out) + ATP + H2O = taurine(in) + ADP + phosphate + H(+). Its function is as follows. Part of the ABC transporter complex TauABC involved in taurine import. Responsible for energy coupling to the transport system. The protein is Taurine import ATP-binding protein TauB of Burkholderia pseudomallei (strain 1710b).